The sequence spans 397 residues: MTAAAAAGEIPAEDAPPPGALYSFGTPWPEFNEGISYIDTFRCADAGATTTLIEFYSTSYKSSAPLPGWIKRIRDGQITVDGEVATDPDMILREGSKLVYHRLPWQEPFAPHLLDVLYEDDDMIALNKPSGLQVLPKGLFQQRTVLAQLQLKDWKMPSSFCSKRKDAQSHPVPVHRLGRGTSGLLLCAKTKLAKAQLAAYFAEGATNAGKSRDETDICKARKISKFYRALVTGILENDEVMITQPIGLVRYPGVAEGLYAACSSGKPAMSKVRVLERLKIHNHTLIQVEIHSGRPHQIRIHLAYIGHPLVDDPLYGIGGQPKFDEPEPTSTADSFAYDGGYERPLQPVPGDCGYHLHAHWLVLCHPTTNEMIKITAPLPHILQTREEQQDTAKLLGG.

An S4 RNA-binding domain is found at 64–114; it reads APLPGWIKRIRDGQITVDGEVATDPDMILREGSKLVYHRLPWQEPFAPHLL.

The protein belongs to the pseudouridine synthase RluA family.

The enzyme catalyses a uridine in RNA = a pseudouridine in RNA. The protein is RNA pseudouridine synthase 5 of Oryza sativa subsp. japonica (Rice).